The following is an 87-amino-acid chain: MANIKSQIKRIGTNKKAQERNKAVKSELKTAIRSVKTAITAGDKDAAVKAVSLAGKKLDKAASKGVIHKNQAANRKGAIAKQVAKIG.

Residues 1–22 (MANIKSQIKRIGTNKKAQERNK) are disordered.

Belongs to the bacterial ribosomal protein bS20 family.

In terms of biological role, binds directly to 16S ribosomal RNA. The chain is Small ribosomal subunit protein bS20 from Clavibacter michiganensis subsp. michiganensis (strain NCPPB 382).